The chain runs to 522 residues: Calcium-dependent protein kinase 14 (522 aa).

Composition is skewed to low complexity over residues 1–12 (MGNCCPPGSSSE) and 19–45 (SSGS…AAPA). The interval 1-58 (MGNCCPPGSSSEPDPPPASSGSSRPAGSAGAAASPATISPSAAPAPAKPPAPIGPVLG) is disordered. Gly-2 carries N-myristoyl glycine lipidation. A Protein kinase domain is found at 68 to 326 (YTVGKELGRG…AYDVLNHPWI (259 aa)). ATP is bound by residues 74–82 (LGRGQFGVT) and Lys-97. The Proton acceptor role is filled by Asp-192. Residues 332-362 (APDTPLDNAVLGRLKQFRAMNQFKKAALRVI) form an autoinhibitory domain region. EF-hand domains lie at 369-404 (EEIR…KGTK), 405-440 (LTEA…MNRM), 441-476 (DREE…KGLM), and 480-511 (EIKD…GDPE). Ca(2+) contacts are provided by Asp-382, Asp-384, Ser-386, Thr-388, Glu-393, Asp-418, Asp-420, Asn-422, Thr-424, Glu-429, Asp-454, Asp-456, Ser-458, Tyr-460, Glu-465, Asp-489, Asp-491, Asp-493, Arg-495, and Glu-500.

Belongs to the protein kinase superfamily. Ser/Thr protein kinase family. CDPK subfamily.

It is found in the membrane. The catalysed reaction is L-seryl-[protein] + ATP = O-phospho-L-seryl-[protein] + ADP + H(+). It carries out the reaction L-threonyl-[protein] + ATP = O-phospho-L-threonyl-[protein] + ADP + H(+). With respect to regulation, activated by calcium. Autophosphorylation may play an important role in the regulation of the kinase activity. In terms of biological role, may play a role in signal transduction pathways that involve calcium as a second messenger. The protein is Calcium-dependent protein kinase 14 of Oryza sativa subsp. japonica (Rice).